A 340-amino-acid polypeptide reads, in one-letter code: Guanine nucleotide-binding protein subunit beta-4 (340 aa).

The residue at position 2 (serine 2) is an N-acetylserine. Serine 2 carries the post-translational modification Phosphoserine. 5 WD repeats span residues 53–92 (GHLAKIYAMHWGYDSRLLVSASQDGKLIIWDSYTTNKMHA), 95–134 (LRSSWVMTCAYAPSGNYVACGGLDNICSIYNLKTREGNVR), 141–179 (GHTGYLSCCRFLDDSQIVTSSGDTTCALWDIETAQQTTT), 182–221 (GHSGDVMSLSLSPDMRTFVSGACDASSKLWDIRDGMCRQS), and 224–263 (GHVSDINAVSFFPNGYAFATGSDDATCRLFDLRADQELLL). Histidine 266 is subject to Phosphohistidine. 2 WD repeats span residues 268–307 (NIICGITSVAFSKSGRLLLAGYDDFNCNVWDTLKGDRAGV) and 310–339 (GHDNRVSCLGVTDDGMAVATGSWDSFLRIW).

The protein belongs to the WD repeat G protein beta family. As to quaternary structure, g proteins are composed of 3 units, alpha, beta and gamma. In terms of tissue distribution, strongly expressed in lung and placenta, whereas it is weakly expressed in brain and heart. Abundantly expressed in the axons and Schwann cells of peripheral nerves.

In terms of biological role, guanine nucleotide-binding proteins (G proteins) are involved as a modulator or transducer in various transmembrane signaling systems. The beta and gamma chains are required for the GTPase activity, for replacement of GDP by GTP, and for G protein-effector interaction. This chain is Guanine nucleotide-binding protein subunit beta-4 (GNB4), found in Homo sapiens (Human).